The chain runs to 196 residues: Large ribosomal subunit protein bL9 (196 aa).

This sequence belongs to the bacterial ribosomal protein bL9 family.

Its function is as follows. Binds to the 23S rRNA. The protein is Large ribosomal subunit protein bL9 of Rhodopseudomonas palustris (strain HaA2).